The following is a 605-amino-acid chain: Dihydrogeodin oxidase (605 aa).

The signal sequence occupies residues 1–18; it reads MPSLKDWVVAGLVPMTIA. Asparagine 27, asparagine 107, and asparagine 112 each carry an N-linked (GlcNAc...) asparagine glycan. 3 Plastocyanin-like domains span residues 65 to 183, 189 to 347, and 424 to 567; these read TVTQ…GPSS, DLGP…YDES, and YVDW…KIKP. Histidine 117, histidine 119, histidine 161, and histidine 163 together coordinate Cu cation. N-linked (GlcNAc...) asparagine glycans are attached at residues asparagine 278 and asparagine 467. Residues histidine 484, histidine 487, histidine 489, histidine 543, cysteine 544, histidine 545, and histidine 549 each contribute to the Cu cation site.

The protein belongs to the multicopper oxidase family. The cofactor is Cu cation.

It catalyses the reaction 2 dihydrogeodin + O2 + 2 H(+) = 2 (+)-geodin + 2 H2O. The protein operates within secondary metabolite biosynthesis. In terms of biological role, dihydrogeodin oxidase; part of the gene cluster that mediates the biosynthesis of geodin, an intermediate in the biosynthesis of other natural products. The pathway begins with the synthesis of atrochrysone thioester by the polyketide synthase (PKS) gedC. The atrochrysone carboxyl ACP thioesterase gedB then breaks the thioester bond and releases the atrochrysone carboxylic acid from gedC. The atrochrysone carboxylic acid is then converted to atrochrysone which is further transformed into emodinanthrone. The next step is performed by the emodinanthrone oxygenase gedH that catalyzes the oxidation of emodinanthrone to emodin. Emodin O-methyltransferase encoded probably by gedA then catalyzes methylation of the 8-hydroxy group of emodin to form questin. Ring cleavage of questin by questin oxidase gedK leads to desmethylsulochrin via several intermediates including questin epoxide. Another methylation step probably catalyzed by methyltransferase gedG leads to the formation of sulochrin which is further converted to dihydrogeodin by the sulochrin halogenase gedL. Finally, the dihydrogeodin oxidase gedJ catalyzes the stereospecific phenol oxidative coupling reaction converting dihydrogeodin to geodin. This chain is Dihydrogeodin oxidase, found in Aspergillus terreus (strain NIH 2624 / FGSC A1156).